The chain runs to 335 residues: Proline racemase (335 aa).

Cysteine 91 acts as the Proton acceptor in catalysis. The Proton donor role is filled by cysteine 255.

The protein belongs to the proline racemase family. Homodimer.

The catalysed reaction is L-proline = D-proline. Catalyzes the reversible interconversion of L- and D-proline. Plays an important role in the regulation of intra- and extracellular amino acid pools, allowing the bacterium to profit from host precursors and enzymatic pathways. Strong B-cell mitogen. This is Proline racemase from Clostridioides difficile (strain 630) (Peptoclostridium difficile).